A 315-amino-acid polypeptide reads, in one-letter code: Acetyl-coenzyme A carboxylase carboxyl transferase subunit beta, chloroplastic (315 aa).

The region spanning 47–315 is the CoA carboxyltransferase N-terminal domain; it reads LWTRCDSCEN…VYKESNSYLF (269 aa). C51, C54, C70, and C73 together coordinate Zn(2+). The C4-type zinc-finger motif lies at 51–73; sequence CDSCENMLYVRFLKQNKRICEEC.

The protein belongs to the AccD/PCCB family. Acetyl-CoA carboxylase is a heterohexamer composed of biotin carboxyl carrier protein, biotin carboxylase and 2 subunits each of ACCase subunit alpha and ACCase plastid-coded subunit beta (accD). Zn(2+) is required as a cofactor.

Its subcellular location is the plastid. The protein resides in the chloroplast stroma. The catalysed reaction is N(6)-carboxybiotinyl-L-lysyl-[protein] + acetyl-CoA = N(6)-biotinyl-L-lysyl-[protein] + malonyl-CoA. It functions in the pathway lipid metabolism; malonyl-CoA biosynthesis; malonyl-CoA from acetyl-CoA: step 1/1. Its function is as follows. Component of the acetyl coenzyme A carboxylase (ACC) complex. Biotin carboxylase (BC) catalyzes the carboxylation of biotin on its carrier protein (BCCP) and then the CO(2) group is transferred by the transcarboxylase to acetyl-CoA to form malonyl-CoA. The polypeptide is Acetyl-coenzyme A carboxylase carboxyl transferase subunit beta, chloroplastic (Physcomitrium patens (Spreading-leaved earth moss)).